The sequence spans 143 residues: Transcriptional regulator MraZ (143 aa).

2 SpoVT-AbrB domains span residues 5 to 47 (EYKH…SLKE) and 76 to 119 (ACEC…SEEN).

It belongs to the MraZ family. In terms of assembly, forms oligomers.

Its subcellular location is the cytoplasm. The protein resides in the nucleoid. This Caldicellulosiruptor saccharolyticus (strain ATCC 43494 / DSM 8903 / Tp8T 6331) protein is Transcriptional regulator MraZ.